Consider the following 424-residue polypeptide: Arogenate dehydratase 3, chloroplastic (424 aa).

The N-terminal 24 residues, 1-24 (MRTLLPSHTPATVTTAARRRHVIH), are a transit peptide targeting the chloroplast. A compositionally biased stretch (low complexity) spans 57–71 (EQSESLSSNSNGSSS). The disordered stretch occupies residues 57–77 (EQSESLSSNSNGSSSYHVSAV). The Prephenate dehydratase domain maps to 122–299 (RVAYQGVPGA…NVTRFVMLAR (178 aa)). The region spanning 313–404 (SIVFAHEKGT…SFLRVLGSYP (92 aa)) is the ACT domain.

As to quaternary structure, may interact with GPA1. In terms of tissue distribution, expressed in roots, leaves, stems, flowers and siliques.

The protein localises to the plastid. Its subcellular location is the chloroplast stroma. It catalyses the reaction L-arogenate + H(+) = L-phenylalanine + CO2 + H2O. The protein operates within amino-acid biosynthesis; L-phenylalanine biosynthesis; L-phenylalanine from L-arogenate: step 1/1. Functionally, converts the prephenate produced from the shikimate-chorismate pathway into phenylalanine. Together with GCR1 and GPA1, required for blue light-mediated synthesis of phenylpyruvate and subsequently of phenylalanine (Phe), in etiolated seedlings. The chain is Arogenate dehydratase 3, chloroplastic from Arabidopsis thaliana (Mouse-ear cress).